A 603-amino-acid chain; its full sequence is Granule-bound starch synthase 1, chloroplastic/amyloplastic (603 aa).

Residues 1–75 (MATITGSSMP…SEKSLGKIVC (75 aa)) constitute a chloroplast transit peptide. Position 91 (lysine 91) interacts with ADP-alpha-D-glucose.

The protein belongs to the glycosyltransferase 1 family. Bacterial/plant glycogen synthase subfamily. As to expression, expressed in pods and leaves. No expression in flowers or stipules.

The protein localises to the plastid. It is found in the chloroplast. It localises to the amyloplast. It catalyses the reaction an NDP-alpha-D-glucose + [(1-&gt;4)-alpha-D-glucosyl](n) = [(1-&gt;4)-alpha-D-glucosyl](n+1) + a ribonucleoside 5'-diphosphate + H(+). The protein operates within glycan biosynthesis; starch biosynthesis. Its function is as follows. May be responsible for the synthesis of amylose. The protein is Granule-bound starch synthase 1, chloroplastic/amyloplastic of Pisum sativum (Garden pea).